The sequence spans 419 residues: MAVCAGRLKCFGNPAVSLRTAASRAYATTTSPDPAIPSSSSASSSSALPKRPQTSFRDKLNAGPSFSDFLSGGNRDDARILDPNEAYALKTALVGPKGKKKEITRLPSWLKTSIPDSNNYKRIKNDLRGLGLHTVCEEARCPNISECWGGSSKSAATATIMLMGDTCTRACRFCSVKTSKTPPPLDPHEPENTAEALSRWGLGYVVLTTVDRDDLIDGGARHFAETVIRIKQKAPNILVECLTGDYAGDLEMVALMAKSGLDVYAHNVETVEALTPHVRDRRANFQTSLRVLKAAKAAVPSLITKTSMMLGLGETEEQMWDALRQLRAANVDVVTFGQYMRPTKRHMPVHEYVRPDVFELWKDRALEMGFLYCASGPLVRSSYKAGEAFIENVLKKRRAESTGPESTNVPNVTPDAIVR.

The transit peptide at 1 to 26 (MAVCAGRLKCFGNPAVSLRTAASRAY) directs the protein to the mitochondrion. The segment covering 28 to 47 (TTTSPDPAIPSSSSASSSSA) has biased composition (low complexity). A disordered region spans residues 28-61 (TTTSPDPAIPSSSSASSSSALPKRPQTSFRDKLN). Cys136, Cys141, Cys147, Cys167, Cys171, Cys174, and Ser382 together coordinate [4Fe-4S] cluster. The 222-residue stretch at 150-371 (GSSKSAATAT…KDRALEMGFL (222 aa)) folds into the Radical SAM core domain. A disordered region spans residues 399–419 (AESTGPESTNVPNVTPDAIVR).

The protein belongs to the radical SAM superfamily. Lipoyl synthase family. It depends on [4Fe-4S] cluster as a cofactor.

It localises to the mitochondrion. The enzyme catalyses [[Fe-S] cluster scaffold protein carrying a second [4Fe-4S](2+) cluster] + N(6)-octanoyl-L-lysyl-[protein] + 2 oxidized [2Fe-2S]-[ferredoxin] + 2 S-adenosyl-L-methionine + 4 H(+) = [[Fe-S] cluster scaffold protein] + N(6)-[(R)-dihydrolipoyl]-L-lysyl-[protein] + 4 Fe(3+) + 2 hydrogen sulfide + 2 5'-deoxyadenosine + 2 L-methionine + 2 reduced [2Fe-2S]-[ferredoxin]. Its pathway is protein modification; protein lipoylation via endogenous pathway; protein N(6)-(lipoyl)lysine from octanoyl-[acyl-carrier-protein]: step 2/2. In terms of biological role, catalyzes the radical-mediated insertion of two sulfur atoms into the C-6 and C-8 positions of the octanoyl moiety bound to the lipoyl domains of lipoate-dependent enzymes, thereby converting the octanoylated domains into lipoylated derivatives. The polypeptide is Lipoyl synthase, mitochondrial (Coccidioides posadasii (strain C735) (Valley fever fungus)).